The chain runs to 45 residues: MLKYIYMHLSHKYNHILFTYNMRIYLIKRNHMLFTHMFTTYAYIM.

The protein belongs to the asfivirus E66L family.

The protein localises to the host endoplasmic reticulum. In terms of biological role, inhibits host protein translation, probably through the EIF2AK2/EIF2S1 signaling pathway. Promotes cell retention in the G0/G1 phase. The chain is Host translation inhibitor E66L from Ornithodoros (relapsing fever ticks).